Reading from the N-terminus, the 166-residue chain is Succinate dehydrogenase [ubiquinone] cytochrome b small subunit, mitochondrial (166 aa).

Over 1-65 (MASVARSSAL…VPPPSPSHGS (65 aa)) the chain is Mitochondrial matrix. The helical transmembrane segment at 66-87 (YHWTFDRVVAAGLIPLTVAPFA) threads the bilayer. Over 88–94 (AGSLNPT) the chain is Mitochondrial intermembrane. The chain crosses the membrane as a helical span at residues 95–115 (MDAVLAATILIHSHTGFGNII). H106 contributes to the heme binding site. Residues 116–124 (VDYVPSKRV) lie on the Mitochondrial matrix side of the membrane. Y118 serves as a coordination point for a ubiquinone. Residues 125 to 149 (PKARKVFTWGLNAATVLVGLALYEF) form a helical membrane-spanning segment. Topologically, residues 150–166 (ETTDVGLTETIKRVWKA) are mitochondrial intermembrane.

The protein belongs to the CybS family. In terms of assembly, forms part of complex II containing four subunits: a flavoprotein (FP), an iron-sulfur protein (IP) and a cytochrome b composed of a large and a small subunit.

The protein localises to the mitochondrion inner membrane. The protein operates within carbohydrate metabolism; tricarboxylic acid cycle. Functionally, membrane-anchoring subunit of succinate dehydrogenase (SDH) that is involved in complex II of the mitochondrial electron transport chain and is responsible for transferring electrons from succinate to ubiquinone (coenzyme Q). This chain is Succinate dehydrogenase [ubiquinone] cytochrome b small subunit, mitochondrial, found in Neurospora crassa (strain ATCC 24698 / 74-OR23-1A / CBS 708.71 / DSM 1257 / FGSC 987).